A 314-amino-acid chain; its full sequence is Porphobilinogen deaminase (314 aa).

Position 242 is an S-(dipyrrolylmethanemethyl)cysteine (cysteine 242).

It belongs to the HMBS family. In terms of assembly, monomer. Requires dipyrromethane as cofactor.

It catalyses the reaction 4 porphobilinogen + H2O = hydroxymethylbilane + 4 NH4(+). Its pathway is porphyrin-containing compound metabolism; protoporphyrin-IX biosynthesis; coproporphyrinogen-III from 5-aminolevulinate: step 2/4. Tetrapolymerization of the monopyrrole PBG into the hydroxymethylbilane pre-uroporphyrinogen in several discrete steps. The sequence is that of Porphobilinogen deaminase (hemC) from Buchnera aphidicola subsp. Acyrthosiphon pisum (strain APS) (Acyrthosiphon pisum symbiotic bacterium).